A 1749-amino-acid chain; its full sequence is Intraflagellar transport protein 172 homolog (1749 aa).

Met-1 carries the N-acetylmethionine modification. Lys-4 participates in a covalent cross-link: Glycyl lysine isopeptide (Lys-Gly) (interchain with G-Cter in SUMO1). WD repeat units lie at residues 14–53, 64–103, 110–148, 150–191, 195–233, 238–278, 284–323, 483–520, and 521–559; these read DGAA…RDKF, RKSY…GDKK, IQTS…SSTI, GTES…ESQG, NHPC…QTFD, PQER…WEEA, ANLY…SIYK, SHES…CSKT, and MILN…ERVT. The TPR 1 repeat unit spans residues 593–624; that stretch reads DEGLIEFGTAIDDGNYTRATAFLETLEMTPET. Arg-672 is subject to Omega-N-methylarginine. TPR repeat units lie at residues 692-725, 809-842, 854-887, 912-945, 947-970, 971-1004, 1042-1075, 1142-1175, 1276-1309, 1345-1378, 1411-1445, 1447-1477, and 1574-1607; these read EKNY…EECI, GELY…MKAV, VRLE…IKAI, SKYY…KDAI, MYTQ…PEDV, SVLY…DLAI, EGRL…EEAY, PEIH…KEAV, VEGL…GSSG, IGKH…NKAK, GVDV…LHKY, ALYA…NPQN, and DKAF…TDAI.

The protein belongs to the IFT172 family. In terms of assembly, interacts with IFT88. Interacts with IFT57. Interacts with RABL2/RABL2A; binds preferentially to GDP-bound RABL2. Co-localizes with RABL2/RABL2A in the midpiece of elongated spermatids within the testis (at protein level). Expressed in the flagellum of elongated spermatids and sperm in the testis lumen (at protein level).

It localises to the cell projection. It is found in the cilium. Required for the maintenance and formation of cilia. Plays an indirect role in hedgehog (Hh) signaling, cilia being required for all activity of the hedgehog pathway. In Mus musculus (Mouse), this protein is Intraflagellar transport protein 172 homolog (Ift172).